A 193-amino-acid polypeptide reads, in one-letter code: Putative manganese efflux pump MntP (193 aa).

Transmembrane regions (helical) follow at residues 6–26 (VVFVALALSADCFAVSIGIAC), 39–59 (VAGTFGLFQAGMAVIGYYAGL), 61–81 (IADVISSFDHWVAFGLLTVIG), 106–126 (LGLLGVAIATSIDALAVGLTF), 132–152 (NIGLAALLVGAVSLAVSYLGF), and 165–185 (WVGIAGGLILCLIGLKILAEH).

It belongs to the MntP (TC 9.B.29) family.

The protein resides in the cell membrane. In terms of biological role, probably functions as a manganese efflux pump. This chain is Putative manganese efflux pump MntP, found in Dehalococcoides mccartyi (strain ATCC BAA-2266 / KCTC 15142 / 195) (Dehalococcoides ethenogenes (strain 195)).